Consider the following 650-residue polypeptide: Acetyl-coenzyme A synthetase (650 aa).

Residues 191–194 (RGGR), threonine 311, and asparagine 335 contribute to the CoA site. ATP is bound by residues 387–389 (GEP), 411–416 (DTWWQT), aspartate 500, and arginine 515. Serine 523 is a binding site for CoA. Residue arginine 526 coordinates ATP. Mg(2+) is bound by residues valine 537, histidine 539, and valine 542. Residue arginine 584 participates in CoA binding. Position 609 is an N6-acetyllysine (lysine 609).

Belongs to the ATP-dependent AMP-binding enzyme family. Mg(2+) is required as a cofactor. Acetylated. Deacetylation by the SIR2-homolog deacetylase activates the enzyme.

It catalyses the reaction acetate + ATP + CoA = acetyl-CoA + AMP + diphosphate. In terms of biological role, catalyzes the conversion of acetate into acetyl-CoA (AcCoA), an essential intermediate at the junction of anabolic and catabolic pathways. AcsA undergoes a two-step reaction. In the first half reaction, AcsA combines acetate with ATP to form acetyl-adenylate (AcAMP) intermediate. In the second half reaction, it can then transfer the acetyl group from AcAMP to the sulfhydryl group of CoA, forming the product AcCoA. The sequence is that of Acetyl-coenzyme A synthetase from Shewanella oneidensis (strain ATCC 700550 / JCM 31522 / CIP 106686 / LMG 19005 / NCIMB 14063 / MR-1).